Here is a 276-residue protein sequence, read N- to C-terminus: S-adenosylmethionine decarboxylase proenzyme (276 aa).

Serine 124 serves as the catalytic Schiff-base intermediate with substrate; via pyruvic acid. The residue at position 124 (serine 124) is a Pyruvic acid (Ser); by autocatalysis. Catalysis depends on histidine 129, which acts as the Proton acceptor; for processing activity. The active-site Proton donor; for catalytic activity is cysteine 152.

Belongs to the prokaryotic AdoMetDC family. Type 2 subfamily. As to quaternary structure, heterooctamer of four alpha and four beta chains arranged as a tetramer of alpha/beta heterodimers. The cofactor is pyruvate. In terms of processing, is synthesized initially as an inactive proenzyme. Formation of the active enzyme involves a self-maturation process in which the active site pyruvoyl group is generated from an internal serine residue via an autocatalytic post-translational modification. Two non-identical subunits are generated from the proenzyme in this reaction, and the pyruvate is formed at the N-terminus of the alpha chain, which is derived from the carboxyl end of the proenzyme. The post-translation cleavage follows an unusual pathway, termed non-hydrolytic serinolysis, in which the side chain hydroxyl group of the serine supplies its oxygen atom to form the C-terminus of the beta chain, while the remainder of the serine residue undergoes an oxidative deamination to produce ammonia and the pyruvoyl group blocking the N-terminus of the alpha chain.

The catalysed reaction is S-adenosyl-L-methionine + H(+) = S-adenosyl 3-(methylsulfanyl)propylamine + CO2. It participates in amine and polyamine biosynthesis; S-adenosylmethioninamine biosynthesis; S-adenosylmethioninamine from S-adenosyl-L-methionine: step 1/1. Functionally, catalyzes the decarboxylation of S-adenosylmethionine to S-adenosylmethioninamine (dcAdoMet), the propylamine donor required for the synthesis of the polyamines spermine and spermidine from the diamine putrescine. This is S-adenosylmethionine decarboxylase proenzyme from Desulfitobacterium hafniense (strain Y51).